Reading from the N-terminus, the 453-residue chain is tRNA modification GTPase MnmE (453 aa).

Residues R22, E79, and K119 each coordinate (6S)-5-formyl-5,6,7,8-tetrahydrofolate. The 162-residue stretch at 215–376 (GMKVVIAGRP…LRNHLKECMG (162 aa)) folds into the TrmE-type G domain. Position 225 (N225) interacts with K(+). Residues 225–230 (NAGKSS), 244–250 (TDIAGTT), 269–272 (DTAG), and 334–337 (NKAD) contribute to the GTP site. Position 229 (S229) interacts with Mg(2+). T244, I246, and T249 together coordinate K(+). A Mg(2+)-binding site is contributed by T250. (6S)-5-formyl-5,6,7,8-tetrahydrofolate is bound at residue K453.

This sequence belongs to the TRAFAC class TrmE-Era-EngA-EngB-Septin-like GTPase superfamily. TrmE GTPase family. In terms of assembly, homodimer. Heterotetramer of two MnmE and two MnmG subunits. The cofactor is K(+).

It localises to the cytoplasm. Exhibits a very high intrinsic GTPase hydrolysis rate. Involved in the addition of a carboxymethylaminomethyl (cmnm) group at the wobble position (U34) of certain tRNAs, forming tRNA-cmnm(5)s(2)U34. This Vibrio parahaemolyticus serotype O3:K6 (strain RIMD 2210633) protein is tRNA modification GTPase MnmE.